The chain runs to 141 residues: Large ribosomal subunit protein uL11 (141 aa).

Belongs to the universal ribosomal protein uL11 family. Part of the ribosomal stalk of the 50S ribosomal subunit. Interacts with L10 and the large rRNA to form the base of the stalk. L10 forms an elongated spine to which L12 dimers bind in a sequential fashion forming a multimeric L10(L12)X complex. One or more lysine residues are methylated.

Functionally, forms part of the ribosomal stalk which helps the ribosome interact with GTP-bound translation factors. The protein is Large ribosomal subunit protein uL11 of Lactobacillus johnsonii (strain CNCM I-12250 / La1 / NCC 533).